The following is a 233-amino-acid chain: Small ribosomal subunit protein uS3 (233 aa).

Residues 39 to 107 (VRQFLMKTLE…PVQINISEVR (69 aa)) enclose the KH type-2 domain.

It belongs to the universal ribosomal protein uS3 family. In terms of assembly, part of the 30S ribosomal subunit. Forms a tight complex with proteins S10 and S14.

In terms of biological role, binds the lower part of the 30S subunit head. Binds mRNA in the 70S ribosome, positioning it for translation. The protein is Small ribosomal subunit protein uS3 of Buchnera aphidicola subsp. Acyrthosiphon pisum (strain APS) (Acyrthosiphon pisum symbiotic bacterium).